The primary structure comprises 134 residues: Large ribosomal subunit protein bL20 (134 aa).

The protein belongs to the bacterial ribosomal protein bL20 family.

Functionally, binds directly to 23S ribosomal RNA and is necessary for the in vitro assembly process of the 50S ribosomal subunit. It is not involved in the protein synthesizing functions of that subunit. The polypeptide is Large ribosomal subunit protein bL20 (Rhizobium etli (strain CIAT 652)).